A 510-amino-acid polypeptide reads, in one-letter code: Probable cytochrome P450 4d20 (510 aa).

Cys455 serves as a coordination point for heme.

It belongs to the cytochrome P450 family. Requires heme as cofactor.

The protein resides in the endoplasmic reticulum membrane. The protein localises to the microsome membrane. In terms of biological role, may be involved in the metabolism of insect hormones and in the breakdown of synthetic insecticides. This is Probable cytochrome P450 4d20 (Cyp4d20) from Drosophila melanogaster (Fruit fly).